The primary structure comprises 225 residues: Ribosome maturation factor RimM (225 aa).

The PRC barrel domain maps to 144–225 (ADEFYWVDLI…RIVVDWEADY (82 aa)).

The protein belongs to the RimM family. Binds ribosomal protein uS19.

The protein localises to the cytoplasm. An accessory protein needed during the final step in the assembly of 30S ribosomal subunit, possibly for assembly of the head region. Essential for efficient processing of 16S rRNA. May be needed both before and after RbfA during the maturation of 16S rRNA. It has affinity for free ribosomal 30S subunits but not for 70S ribosomes. The chain is Ribosome maturation factor RimM from Burkholderia lata (strain ATCC 17760 / DSM 23089 / LMG 22485 / NCIMB 9086 / R18194 / 383).